A 398-amino-acid polypeptide reads, in one-letter code: tRNA-specific 2-thiouridylase MnmA (398 aa).

ATP-binding positions include 18 to 25 and Leu44; that span reads AMSGGVDS. The active-site Nucleophile is Cys112. Cysteines 112 and 213 form a disulfide. Gly136 is a binding site for ATP. The interval 163 to 165 is interaction with tRNA; sequence RDQ. Catalysis depends on Cys213, which acts as the Cysteine persulfide intermediate.

It belongs to the MnmA/TRMU family.

It is found in the cytoplasm. It catalyses the reaction S-sulfanyl-L-cysteinyl-[protein] + uridine(34) in tRNA + AH2 + ATP = 2-thiouridine(34) in tRNA + L-cysteinyl-[protein] + A + AMP + diphosphate + H(+). Its function is as follows. Catalyzes the 2-thiolation of uridine at the wobble position (U34) of tRNA, leading to the formation of s(2)U34. In Sinorhizobium fredii (strain NBRC 101917 / NGR234), this protein is tRNA-specific 2-thiouridylase MnmA.